Here is a 225-residue protein sequence, read N- to C-terminus: uncharacterized protein (225 aa).

This is an uncharacterized protein from Methanocaldococcus jannaschii (strain ATCC 43067 / DSM 2661 / JAL-1 / JCM 10045 / NBRC 100440) (Methanococcus jannaschii).